A 532-amino-acid polypeptide reads, in one-letter code: Cytochrome P450 12b1, mitochondrial (532 aa).

Heme is bound at residue cysteine 480.

Belongs to the cytochrome P450 family. Requires heme as cofactor.

Its subcellular location is the mitochondrion. In terms of biological role, probably involved in steroid hormones biosynthesis. The polypeptide is Cytochrome P450 12b1, mitochondrial (Cyp12b1) (Drosophila acanthoptera (Fruit fly)).